The sequence spans 131 residues: Aspartate 1-decarboxylase (131 aa).

Ser25 acts as the Schiff-base intermediate with substrate; via pyruvic acid in catalysis. A Pyruvic acid (Ser) modification is found at Ser25. Substrate is bound at residue Thr57. The Proton donor role is filled by Tyr58. 73–75 (GAA) lines the substrate pocket.

The protein belongs to the PanD family. In terms of assembly, heterooctamer of four alpha and four beta subunits. Pyruvate serves as cofactor. Post-translationally, is synthesized initially as an inactive proenzyme, which is activated by self-cleavage at a specific serine bond to produce a beta-subunit with a hydroxyl group at its C-terminus and an alpha-subunit with a pyruvoyl group at its N-terminus.

It localises to the cytoplasm. It carries out the reaction L-aspartate + H(+) = beta-alanine + CO2. Its pathway is cofactor biosynthesis; (R)-pantothenate biosynthesis; beta-alanine from L-aspartate: step 1/1. In terms of biological role, catalyzes the pyruvoyl-dependent decarboxylation of aspartate to produce beta-alanine. In Chlorobium phaeobacteroides (strain DSM 266 / SMG 266 / 2430), this protein is Aspartate 1-decarboxylase.